Here is a 553-residue protein sequence, read N- to C-terminus: Non-SCF-type F-box protein ROY1 (553 aa).

The region spanning F3–I49 is the F-box domain.

Interacts with SKP1 and YPT32; SKP1 is required for the interaction with YPT32.

Its subcellular location is the cytoplasm. It is found in the nucleus. The protein resides in the cytoplasmic vesicle membrane. In terms of biological role, non-SCF-type F-box protein involved in the endocytic with the vacuolar sorting pathway. Acts as a repressor of YPT52 by inhibiting the formation of active, GTP-bound, YPT52. Involved in the defense mechanism against methylmercury toxicity. This Saccharomyces cerevisiae (strain ATCC 204508 / S288c) (Baker's yeast) protein is Non-SCF-type F-box protein ROY1 (ROY1).